Here is a 484-residue protein sequence, read N- to C-terminus: Protein nucleotidyltransferase YdiU (484 aa).

Residues Gly-81, Gly-83, Arg-84, Lys-103, Asp-115, Gly-116, Arg-166, and Arg-173 each coordinate ATP. Asp-244 functions as the Proton acceptor in the catalytic mechanism. Mg(2+) is bound by residues Asn-245 and Asp-254. Asp-254 serves as a coordination point for ATP.

It belongs to the SELO family. Mg(2+) is required as a cofactor. Requires Mn(2+) as cofactor.

It catalyses the reaction L-seryl-[protein] + ATP = 3-O-(5'-adenylyl)-L-seryl-[protein] + diphosphate. The catalysed reaction is L-threonyl-[protein] + ATP = 3-O-(5'-adenylyl)-L-threonyl-[protein] + diphosphate. The enzyme catalyses L-tyrosyl-[protein] + ATP = O-(5'-adenylyl)-L-tyrosyl-[protein] + diphosphate. It carries out the reaction L-histidyl-[protein] + UTP = N(tele)-(5'-uridylyl)-L-histidyl-[protein] + diphosphate. It catalyses the reaction L-seryl-[protein] + UTP = O-(5'-uridylyl)-L-seryl-[protein] + diphosphate. The catalysed reaction is L-tyrosyl-[protein] + UTP = O-(5'-uridylyl)-L-tyrosyl-[protein] + diphosphate. In terms of biological role, nucleotidyltransferase involved in the post-translational modification of proteins. It can catalyze the addition of adenosine monophosphate (AMP) or uridine monophosphate (UMP) to a protein, resulting in modifications known as AMPylation and UMPylation. The sequence is that of Protein nucleotidyltransferase YdiU from Shewanella baltica (strain OS155 / ATCC BAA-1091).